The following is an 89-amino-acid chain: MKVLFTLAMIVVTLCLGQRMRRDIIDDVCNTCEMSCQWVIANNGTTVCRIPECDTIAAFCKSLKFNMSECMEDDSFIQDHCIRAFLLAD.

Residues 1–22 (MKVLFTLAMIVVTLCLGQRMRR) form the signal peptide.

This sequence belongs to the teretoxin C (TC) superfamily. In terms of processing, contains 4 disulfide bonds. As to expression, expressed by the venom duct.

It localises to the secreted. This chain is Teretoxin Tan22.12, found in Terebra anilis (Auger snail).